A 123-amino-acid chain; its full sequence is Large ribosomal subunit protein bL12 (123 aa).

It belongs to the bacterial ribosomal protein bL12 family. In terms of assembly, homodimer. Part of the ribosomal stalk of the 50S ribosomal subunit. Forms a multimeric L10(L12)X complex, where L10 forms an elongated spine to which 2 to 4 L12 dimers bind in a sequential fashion. Binds GTP-bound translation factors.

In terms of biological role, forms part of the ribosomal stalk which helps the ribosome interact with GTP-bound translation factors. Is thus essential for accurate translation. The chain is Large ribosomal subunit protein bL12 from Bartonella tribocorum (strain CIP 105476 / IBS 506).